Here is a 210-residue protein sequence, read N- to C-terminus: Potassium-transporting ATPase KdpC subunit (210 aa).

Residues 13-33 (LVTLVLLLVCGLAYPLILTGI) form a helical membrane-spanning segment.

This sequence belongs to the KdpC family. The system is composed of three essential subunits: KdpA, KdpB and KdpC.

The protein resides in the cell membrane. Part of the high-affinity ATP-driven potassium transport (or Kdp) system, which catalyzes the hydrolysis of ATP coupled with the electrogenic transport of potassium into the cytoplasm. This subunit acts as a catalytic chaperone that increases the ATP-binding affinity of the ATP-hydrolyzing subunit KdpB by the formation of a transient KdpB/KdpC/ATP ternary complex. The protein is Potassium-transporting ATPase KdpC subunit of Clostridium kluyveri (strain ATCC 8527 / DSM 555 / NBRC 12016 / NCIMB 10680 / K1).